The following is a 341-amino-acid chain: Biotin synthase (341 aa).

One can recognise a Radical SAM core domain in the interval 43–266; that stretch reads SEIQLSQLLS…IAVARIVCPK (224 aa). 3 residues coordinate [4Fe-4S] cluster: C58, C62, and C65. 4 residues coordinate [2Fe-2S] cluster: C102, C133, C193, and R270.

This sequence belongs to the radical SAM superfamily. Biotin synthase family. Homodimer. The cofactor is [4Fe-4S] cluster. It depends on [2Fe-2S] cluster as a cofactor.

The enzyme catalyses (4R,5S)-dethiobiotin + (sulfur carrier)-SH + 2 reduced [2Fe-2S]-[ferredoxin] + 2 S-adenosyl-L-methionine = (sulfur carrier)-H + biotin + 2 5'-deoxyadenosine + 2 L-methionine + 2 oxidized [2Fe-2S]-[ferredoxin]. It functions in the pathway cofactor biosynthesis; biotin biosynthesis; biotin from 7,8-diaminononanoate: step 2/2. Functionally, catalyzes the conversion of dethiobiotin (DTB) to biotin by the insertion of a sulfur atom into dethiobiotin via a radical-based mechanism. This chain is Biotin synthase, found in Caulobacter vibrioides (strain ATCC 19089 / CIP 103742 / CB 15) (Caulobacter crescentus).